A 1026-amino-acid chain; its full sequence is MRFFALFIYRPVATILIAAAITLCGILGFRLLPVAPLPQVDFPVIMVSASLPGASPETMASSVATPLERSLGRIAGVNEMTSSSSLGSTRIILEFNFDRDINGAARDVQAAINAAQSLLPGGMPSRPTYRKANPSDAPIMILTLTSESWSQGKLYDFASTQLAQTIAQIDGVGDVDVGGSSLPAVRVGLNPQALFNQGVSLDEVREAIDSANVRRPQGAIEDSVHRWQIQTNDELKTAAEYQPLIIHYNNGAAVRLGDVASVTDSVQDVRNAGMTNAKPAILLMIRKLPEANIIQTVDGIRAKLPELRAMIPAAIDLQIAQDRSPTIRASLQEVEETLAISVALVILVVFLFLRSGRATLIPAVAVPVSLIGTFAAMYLCGFSLNNLSLMALTIATGFVVDDAIVVLENIARHLEAGMKPLQAALQGTREVGFTVISMSLSLVAVFLPLLLMGGLPGRLLREFAVTLSVAIGISLVVSLTLTPMMCGWMLKSSKPRTQPRKRGVGRLLVALQQGYGTSLKWVLNHTRLVGVVFLGTVALNIWLYIAIPKTFFPEQDTGVLMGGIQADQSISFQAMRGKLQDFMKIIRDDPAVNNVTGFTGGSRVNSGMMFITLKPRGERKETAQQIIDRLRVKLAKEPGARLFLMAVQDIRVGGRQANASYQYTLLSDSLAALREWEPKIRKALSALPQLADVNSDQQDNGAEMNLIYDRDTMSRLGIDVQAANSLLNNAFGQRQISTIYQPMNQYKVVMEVDPRYSQDISALEKMFVINRDGKAIPLSYFAQWRPANAPLSVNHQGLSAASTIAFNLPTGTSLSQATEAINRTMTQLGVPSTVRGSFSGTAQVFQQTMNSQLILIVAAIATVYIVLGILYESYVHPLTILSTLPSAGVGALLALELFNAPFSLIALIGIMLLIGIVKKNAIMMVDFALEAQRSGGLTPEQAIFQACLLRFRPIMMTTLAALFGALPLVLSGGDGSELRQPLGITIVGGLVMSQLLTLYTTPVVYLFFDRLRLRFSRKNSKPVVEI.

Topologically, residues 1-6 (MRFFAL) are cytoplasmic. Residues 7–29 (FIYRPVATILIAAAITLCGILGF) traverse the membrane as a helical segment. Topologically, residues 30-335 (RLLPVAPLPQ…TIRASLQEVE (306 aa)) are periplasmic. The helical transmembrane segment at 336–353 (ETLAISVALVILVVFLFL) threads the bilayer. Topologically, residues 354-359 (RSGRAT) are cytoplasmic. A helical transmembrane segment spans residues 360–379 (LIPAVAVPVSLIGTFAAMYL). The Periplasmic portion of the chain corresponds to 380–388 (CGFSLNNLS). A helical membrane pass occupies residues 389-411 (LMALTIATGFVVDDAIVVLENIA). Residues 412–430 (RHLEAGMKPLQAALQGTRE) are Cytoplasmic-facing. A helical membrane pass occupies residues 431–453 (VGFTVISMSLSLVAVFLPLLLMG). Residues 454–467 (GLPGRLLREFAVTL) lie on the Periplasmic side of the membrane. A helical transmembrane segment spans residues 468–490 (SVAIGISLVVSLTLTPMMCGWML). The Cytoplasmic portion of the chain corresponds to 491-852 (KSSKPRTQPR…QVFQQTMNSQ (362 aa)). Residues 853–875 (LILIVAAIATVYIVLGILYESYV) traverse the membrane as a helical segment. The Periplasmic segment spans residues 876–894 (HPLTILSTLPSAGVGALLA). A helical membrane pass occupies residues 895-917 (LELFNAPFSLIALIGIMLLIGIV). Residues 918–947 (KKNAIMMVDFALEAQRSGGLTPEQAIFQAC) lie on the Cytoplasmic side of the membrane. Residues 948–970 (LLRFRPIMMTTLAALFGALPLVL) form a helical membrane-spanning segment. Residues 971-984 (SGGDGSELRQPLGI) are Periplasmic-facing. Residues 985 to 1007 (TIVGGLVMSQLLTLYTTPVVYLF) form a helical membrane-spanning segment. The Cytoplasmic segment spans residues 1008-1026 (FDRLRLRFSRKNSKPVVEI).

The protein belongs to the resistance-nodulation-cell division (RND) (TC 2.A.6) family. MdtC subfamily. In terms of assembly, part of a tripartite efflux system composed of MdtA, MdtB and MdtC. MdtC forms a heteromultimer with MdtB.

It is found in the cell inner membrane. In Salmonella typhimurium (strain LT2 / SGSC1412 / ATCC 700720), this protein is Multidrug resistance protein MdtC.